The sequence spans 388 residues: Bifunctional enzyme IspD/IspF (388 aa).

A 2-C-methyl-D-erythritol 4-phosphate cytidylyltransferase region spans residues 1–228; that stretch reads MRIAALLLAA…GVIDRNLLPR (228 aa). Positions 228 to 388 are 2-C-methyl-D-erythritol 2,4-cyclodiphosphate synthase; sequence RVGLGYDVHA…SIMVPDNGEA (161 aa). Positions 234 and 236 each coordinate a divalent metal cation. 4-CDP-2-C-methyl-D-erythritol 2-phosphate is bound by residues 234-236 and 260-261; these read DVH and HS. His-268 serves as a coordination point for a divalent metal cation. 4-CDP-2-C-methyl-D-erythritol 2-phosphate contacts are provided by residues 282-284, 358-361, Phe-365, and Arg-368; these read DIG and TTSE.

It in the N-terminal section; belongs to the IspD/TarI cytidylyltransferase family. IspD subfamily. This sequence in the C-terminal section; belongs to the IspF family. Requires a divalent metal cation as cofactor.

The catalysed reaction is 2-C-methyl-D-erythritol 4-phosphate + CTP + H(+) = 4-CDP-2-C-methyl-D-erythritol + diphosphate. It catalyses the reaction 4-CDP-2-C-methyl-D-erythritol 2-phosphate = 2-C-methyl-D-erythritol 2,4-cyclic diphosphate + CMP. Its pathway is isoprenoid biosynthesis; isopentenyl diphosphate biosynthesis via DXP pathway; isopentenyl diphosphate from 1-deoxy-D-xylulose 5-phosphate: step 2/6. It functions in the pathway isoprenoid biosynthesis; isopentenyl diphosphate biosynthesis via DXP pathway; isopentenyl diphosphate from 1-deoxy-D-xylulose 5-phosphate: step 4/6. In terms of biological role, bifunctional enzyme that catalyzes the formation of 4-diphosphocytidyl-2-C-methyl-D-erythritol from CTP and 2-C-methyl-D-erythritol 4-phosphate (MEP) (IspD), and catalyzes the conversion of 4-diphosphocytidyl-2-C-methyl-D-erythritol 2-phosphate (CDP-ME2P) to 2-C-methyl-D-erythritol 2,4-cyclodiphosphate (ME-CPP) with a corresponding release of cytidine 5-monophosphate (CMP) (IspF). In Gluconobacter oxydans (strain 621H) (Gluconobacter suboxydans), this protein is Bifunctional enzyme IspD/IspF.